A 409-amino-acid chain; its full sequence is Arginine deiminase (409 aa).

Cys399 functions as the Amidino-cysteine intermediate in the catalytic mechanism.

Belongs to the arginine deiminase family.

The protein localises to the cytoplasm. The catalysed reaction is L-arginine + H2O = L-citrulline + NH4(+). It functions in the pathway amino-acid degradation; L-arginine degradation via ADI pathway; carbamoyl phosphate from L-arginine: step 1/2. The chain is Arginine deiminase (arcA) from Borreliella afzelii (Borrelia afzelii).